The primary structure comprises 206 residues: Ribosomal RNA small subunit methyltransferase G (206 aa).

S-adenosyl-L-methionine contacts are provided by residues Gly-74, Leu-79, 125–126 (VE), and Arg-140.

The protein belongs to the methyltransferase superfamily. RNA methyltransferase RsmG family.

Its subcellular location is the cytoplasm. It carries out the reaction guanosine(527) in 16S rRNA + S-adenosyl-L-methionine = N(7)-methylguanosine(527) in 16S rRNA + S-adenosyl-L-homocysteine. Functionally, specifically methylates the N7 position of guanine in position 527 of 16S rRNA. This is Ribosomal RNA small subunit methyltransferase G from Shewanella baltica (strain OS223).